A 525-amino-acid polypeptide reads, in one-letter code: Peptide chain release factor 3 (525 aa).

Residues 9 to 276 enclose the tr-type G domain; it reads AKRRTFAIIS…GFTTYAPEPQ (268 aa). Residues 18–25, 86–90, and 140–143 contribute to the GTP site; these read SHPDAGKT, DTPGH, and NKFD.

This sequence belongs to the TRAFAC class translation factor GTPase superfamily. Classic translation factor GTPase family. PrfC subfamily.

It is found in the cytoplasm. Functionally, increases the formation of ribosomal termination complexes and stimulates activities of RF-1 and RF-2. It binds guanine nucleotides and has strong preference for UGA stop codons. It may interact directly with the ribosome. The stimulation of RF-1 and RF-2 is significantly reduced by GTP and GDP, but not by GMP. In Francisella philomiragia subsp. philomiragia (strain ATCC 25017 / CCUG 19701 / FSC 153 / O#319-036), this protein is Peptide chain release factor 3.